The sequence spans 258 residues: MSKVKLTKENIVSLLTQSEDVEFEEDQNQVAFNFKTFCQENLDLIKKMSITSCLTFLKNRQSIMKVVKQSDFTFGKVTIKKNSERVEAKDMTFRRLDSMIRVKLIEETANNENLAIIKAKIASHPLVQAYGLPLDDAKSVRLAIMLGGSIPLIASVDSLEMISVVLAIYQDSQVQELGIEPTKYNTKEALGKVCTVLKSKGFTMDDAQDNKGKEYAKILSSCNPNAKGSIAMDYYSDNLEKFYEMFGVKKEAKIAGVA.

Belongs to the tospovirus nucleocapsid protein family. As to quaternary structure, homotrimer. Binds the viral genomic RNA.

It is found in the virion. Encapsidates the genome protecting it from nucleases. The encapsidated genomic RNA is termed the nucleocapsid (NC) and serves as template for transcription and replication. The NC have a helical organization. The polypeptide is Nucleoprotein (N) (Frankliniella occidentalis (Western flower thrips)).